We begin with the raw amino-acid sequence, 82 residues long: Probable tautomerase XF_1725 (82 aa).

Catalysis depends on Pro-2, which acts as the Proton acceptor; via imino nitrogen.

The protein belongs to the 4-oxalocrotonate tautomerase family.

The sequence is that of Probable tautomerase XF_1725 from Xylella fastidiosa (strain 9a5c).